Reading from the N-terminus, the 116-residue chain is Fluoride-specific ion channel FluC 1 (116 aa).

4 helical membrane passes run 1-21 (MYAP…RYLV), 32-52 (FPLG…WLAG), 54-74 (GAAD…FTTF), and 93-113 (VVVY…LGYH). 2 residues coordinate Na(+): G69 and T72.

This sequence belongs to the fluoride channel Fluc/FEX (TC 1.A.43) family.

Its subcellular location is the cell membrane. It carries out the reaction fluoride(in) = fluoride(out). With respect to regulation, na(+) is not transported, but it plays an essential structural role and its presence is essential for fluoride channel function. Fluoride-specific ion channel. Important for reducing fluoride concentration in the cell, thus reducing its toxicity. This chain is Fluoride-specific ion channel FluC 1, found in Geobacillus kaustophilus (strain HTA426).